A 484-amino-acid chain; its full sequence is 3-isopropylmalate dehydratase large subunit (484 aa).

3 residues coordinate [4Fe-4S] cluster: C352, C412, and C415. The interval 462–484 is disordered; sequence GTLSSPSDLDPAPESAAVSSSAA.

It belongs to the aconitase/IPM isomerase family. LeuC type 1 subfamily. Heterodimer of LeuC and LeuD. Requires [4Fe-4S] cluster as cofactor.

The catalysed reaction is (2R,3S)-3-isopropylmalate = (2S)-2-isopropylmalate. Its pathway is amino-acid biosynthesis; L-leucine biosynthesis; L-leucine from 3-methyl-2-oxobutanoate: step 2/4. In terms of biological role, catalyzes the isomerization between 2-isopropylmalate and 3-isopropylmalate, via the formation of 2-isopropylmaleate. The sequence is that of 3-isopropylmalate dehydratase large subunit from Arthrobacter sp. (strain FB24).